A 195-amino-acid chain; its full sequence is Porimin (195 aa).

Residues M1 to A23 form the signal peptide. Residues Q24–D152 are Extracellular-facing. N36, N45, N51, N59, N109, and N115 each carry an N-linked (GlcNAc...) asparagine glycan. A disordered region spans residues V99 to A127. Positions P101 to P126 are enriched in polar residues. The chain crosses the membrane as a helical span at residues A153–G173. Over C174 to I195 the chain is Cytoplasmic. Position 187 is a phosphoserine (S187).

This sequence belongs to the CD164 family.

The protein localises to the membrane. In terms of biological role, implicated in oncotic cell death, characterized by cell swelling, organelle swelling, vacuolization and increased membrane permeability. The sequence is that of Porimin (Tmem123) from Mus musculus (Mouse).